The primary structure comprises 412 residues: NADH-quinone oxidoreductase subunit D (412 aa).

Belongs to the complex I 49 kDa subunit family. NDH-1 is composed of 14 different subunits. Subunits NuoB, C, D, E, F, and G constitute the peripheral sector of the complex.

It is found in the cell inner membrane. It carries out the reaction a quinone + NADH + 5 H(+)(in) = a quinol + NAD(+) + 4 H(+)(out). NDH-1 shuttles electrons from NADH, via FMN and iron-sulfur (Fe-S) centers, to quinones in the respiratory chain. The immediate electron acceptor for the enzyme in this species is believed to be a menaquinone. Couples the redox reaction to proton translocation (for every two electrons transferred, four hydrogen ions are translocated across the cytoplasmic membrane), and thus conserves the redox energy in a proton gradient. The polypeptide is NADH-quinone oxidoreductase subunit D (Flavobacterium psychrophilum (strain ATCC 49511 / DSM 21280 / CIP 103535 / JIP02/86)).